A 199-amino-acid polypeptide reads, in one-letter code: GTP cyclohydrolase-2 (199 aa).

52–56 (RMHSE) lines the GTP pocket. The Zn(2+) site is built by C57, C68, and C70. GTP-binding positions include Q73, 94–96 (EGR), and T116. The Proton acceptor role is filled by D128. Residue R130 is the Nucleophile of the active site. GTP is bound by residues T151 and K156.

Belongs to the GTP cyclohydrolase II family. It depends on Zn(2+) as a cofactor.

The enzyme catalyses GTP + 4 H2O = 2,5-diamino-6-hydroxy-4-(5-phosphoribosylamino)-pyrimidine + formate + 2 phosphate + 3 H(+). Its pathway is cofactor biosynthesis; riboflavin biosynthesis; 5-amino-6-(D-ribitylamino)uracil from GTP: step 1/4. Catalyzes the conversion of GTP to 2,5-diamino-6-ribosylamino-4(3H)-pyrimidinone 5'-phosphate (DARP), formate and pyrophosphate. The chain is GTP cyclohydrolase-2 from Aliivibrio salmonicida (strain LFI1238) (Vibrio salmonicida (strain LFI1238)).